The following is a 436-amino-acid chain: UPF0597 protein YhaM (436 aa).

This sequence belongs to the UPF0597 family.

The protein is UPF0597 protein YhaM of Salmonella paratyphi A (strain ATCC 9150 / SARB42).